We begin with the raw amino-acid sequence, 260 residues long: Trialysin (260 aa).

Residues 1–19 (MSKFWLLLLLVAAFQFAHS) form the signal peptide. The propeptide at 20-55 (YPAAEYELDETTNDEVRQFIGDGYFEDEGDDGDEER) is removed in mature form, probably by the serine protease triapsin.

Belongs to the redulysin-like family. As to expression, expressed in salivary glands.

The protein resides in the secreted. It localises to the target cell membrane. In terms of biological role, pore-forming protein that induces lysis of T.cruzi trypomastigotes, bacteria E.coli and human red blood cells. The parasite lysis is much more important than the hemolysis, probably due to difference in membrane composition. Its action on protozoan parasites and bacteria may indicate a role in the control of microorganism growth in the salivary glands. This chain is Trialysin, found in Triatoma infestans (Assassin bug).